Consider the following 117-residue polypeptide: Large ribosomal subunit protein bL20 (117 aa).

The protein belongs to the bacterial ribosomal protein bL20 family.

Binds directly to 23S ribosomal RNA and is necessary for the in vitro assembly process of the 50S ribosomal subunit. It is not involved in the protein synthesizing functions of that subunit. This is Large ribosomal subunit protein bL20 from Leptospira borgpetersenii serovar Hardjo-bovis (strain JB197).